We begin with the raw amino-acid sequence, 48 residues long: U1-theraphotoxin-Agm1a (48 aa).

3 disulfide bridges follow: C4/C34, C8/C40, and C22/C45. M44 carries the post-translational modification Methionine sulfoxide; partial.

It belongs to the neurotoxin 12 (Hwtx-2) family. 01 (Ap1a) subfamily. In terms of tissue distribution, expressed by the venom gland.

The protein localises to the secreted. In terms of biological role, is toxic to both insects and mammals. Induces reversible paralysis when injected into S.frugiperda larvae. Reduces both the amplitude and frequency of responses from muscle (GF-TTM and GF-DLM) pathways in the D.melanogaster giant fiber circuit, suggesting an action at the neuromuscular junction, which is mediated by glutamatergic receptors. In mice, intracranial injection of 30 ug causes increased urination, myoclonus, hypermotility with circular movements followed by respiratory and generalized seizures resulting in death within 25-35 minutes of injection. This Acanthoscurria gomesiana (Tarantula spider) protein is U1-theraphotoxin-Agm1a.